A 930-amino-acid chain; its full sequence is Protein translocase subunit SecA (930 aa).

ATP-binding positions include glutamine 87, 105-109 (GEGKT), and aspartate 516. 4 residues coordinate Zn(2+): cysteine 914, cysteine 916, cysteine 925, and histidine 926.

This sequence belongs to the SecA family. As to quaternary structure, monomer and homodimer. Part of the essential Sec protein translocation apparatus which comprises SecA, SecYEG and auxiliary proteins SecDF-YajC and YidC. It depends on Zn(2+) as a cofactor.

The protein localises to the cell inner membrane. Its subcellular location is the cytoplasm. It catalyses the reaction ATP + H2O + cellular proteinSide 1 = ADP + phosphate + cellular proteinSide 2.. Functionally, part of the Sec protein translocase complex. Interacts with the SecYEG preprotein conducting channel. Has a central role in coupling the hydrolysis of ATP to the transfer of proteins into and across the cell membrane, serving both as a receptor for the preprotein-SecB complex and as an ATP-driven molecular motor driving the stepwise translocation of polypeptide chains across the membrane. This is Protein translocase subunit SecA from Variovorax paradoxus (strain S110).